The sequence spans 74 residues: Putative membrane protein insertion efficiency factor (74 aa).

The protein belongs to the UPF0161 family.

It localises to the cell inner membrane. Functionally, could be involved in insertion of integral membrane proteins into the membrane. This is Putative membrane protein insertion efficiency factor from Endomicrobium trichonymphae.